A 224-amino-acid polypeptide reads, in one-letter code: Homeobox protein Hox-B6 (224 aa).

The short motif at 127-132 (VYPWMQ) is the Antp-type hexapeptide element. A DNA-binding region (homeobox) is located at residues 146 to 205 (GRRGRQTYTRYQTLELEKEFHYNRYLTRRRRIEIAHALCLTERQIKIWFQNRRMKWKKES). Ser-214 is modified (phosphoserine).

Belongs to the Antp homeobox family.

It localises to the nucleus. Its function is as follows. Sequence-specific transcription factor which is part of a developmental regulatory system that provides cells with specific positional identities on the anterior-posterior axis. This Homo sapiens (Human) protein is Homeobox protein Hox-B6 (HOXB6).